Reading from the N-terminus, the 589-residue chain is 3-hydroxy-3-methylglutaryl coenzyme A reductase 2-B (589 aa).

Residues 1–35 are Lumenal-facing; sequence MDVRRRPVTKTLTAGEPLKSQNQHSSSLKASDALP. A helical transmembrane segment spans residues 36-56; the sequence is LPLYLTNGLFFTMFFSVMYFL. Residues 57–79 lie on the Cytoplasmic side of the membrane; the sequence is LHRWREKIRNSVPLHVVTLSELA. Residues 80–100 form a helical membrane-spanning segment; that stretch reads ALVLLVASVIYLLGFFGIGFV. Residues 101 to 544 lie on the Lumenal side of the membrane; sequence QSLIRPSPDS…SKESPGPNSR (444 aa). N-linked (GlcNAc...) asparagine glycosylation is present at asparagine 256. The active-site Charge relay system is glutamate 268. Residue asparagine 332 is glycosylated (N-linked (GlcNAc...) asparagine). Active-site charge relay system residues include lysine 400 and aspartate 476. Residues 545 to 565 form a helical membrane-spanning segment; the sequence is LLASIVAGSVLAGELSLMSAL. Over 566–589 the chain is Cytoplasmic; that stretch reads AAGQLVKSHMKFNRSSKDVSKLSS. The active-site Proton donor is histidine 574.

The protein belongs to the HMG-CoA reductase family.

It is found in the endoplasmic reticulum membrane. It carries out the reaction (R)-mevalonate + 2 NADP(+) + CoA = (3S)-3-hydroxy-3-methylglutaryl-CoA + 2 NADPH + 2 H(+). The protein operates within metabolic intermediate biosynthesis; (R)-mevalonate biosynthesis; (R)-mevalonate from acetyl-CoA: step 3/3. Functionally, catalyzes the synthesis of mevalonate, the specific precursor of all isoprenoid compounds present in plants. Component of the triterpene saponins (e.g. ginsenosides or panaxosides) and phytosterols biosynthetic pathways. Promotes triterpenes accumulation in roots. The chain is 3-hydroxy-3-methylglutaryl coenzyme A reductase 2-B from Panax ginseng (Korean ginseng).